The following is a 417-amino-acid chain: V-set and immunoglobulin domain-containing protein 8 (417 aa).

Residues 1–21 (MGVRGALHLLLVCLSPALLSA) form the signal peptide. Ig-like V-type domains follow at residues 22 to 140 (VRIN…VIVT) and 145 to 256 (PAVP…VKVS). Topologically, residues 22-262 (VRINGDGQEV…VKVSDSQRVG (241 aa)) are extracellular. 2 cysteine pairs are disulfide-bonded: Cys-44–Cys-125 and Cys-166–Cys-238. The helical transmembrane segment at 263–283 (MIVGAVLGSLLMLACLALGIW) threads the bilayer. The Cytoplasmic segment spans residues 284 to 417 (GLICCCCGGG…QRSCKDGLLV (134 aa)).

It localises to the membrane. The chain is V-set and immunoglobulin domain-containing protein 8 (Vsig8) from Mus musculus (Mouse).